A 701-amino-acid polypeptide reads, in one-letter code: Polyribonucleotide nucleotidyltransferase (701 aa).

Residues D490 and D496 each contribute to the Mg(2+) site. One can recognise a KH domain in the interval 557 to 616 (PKVETMTIKPEKIRDVIGPGGKKINEIIDETGVKLDIEQDGTIFIGAVDQDMINRAREII). The 69-residue stretch at 626–694 (GQVYNAKVRR…DKGRVNASHR (69 aa)) folds into the S1 motif domain.

This sequence belongs to the polyribonucleotide nucleotidyltransferase family. Mg(2+) serves as cofactor.

The protein localises to the cytoplasm. It carries out the reaction RNA(n+1) + phosphate = RNA(n) + a ribonucleoside 5'-diphosphate. In terms of biological role, involved in mRNA degradation. Catalyzes the phosphorolysis of single-stranded polyribonucleotides processively in the 3'- to 5'-direction. This Staphylococcus carnosus (strain TM300) protein is Polyribonucleotide nucleotidyltransferase.